Here is a 396-residue protein sequence, read N- to C-terminus: Elongation factor Tu (396 aa).

One can recognise a tr-type G domain in the interval 10-206; that stretch reads KPHVNVGTIG…ALDTYIPTPE (197 aa). Residues 19-26 form a G1 region; it reads GHVDHGKT. Position 19-26 (19-26) interacts with GTP; that stretch reads GHVDHGKT. A Mg(2+)-binding site is contributed by threonine 26. The interval 60-64 is G2; that stretch reads GITIN. The interval 81-84 is G3; the sequence is DCPG. Residues 81-85 and 136-139 each bind GTP; these read DCPGH and NKCD. The interval 136 to 139 is G4; sequence NKCD. The interval 174–176 is G5; that stretch reads SAK.

The protein belongs to the TRAFAC class translation factor GTPase superfamily. Classic translation factor GTPase family. EF-Tu/EF-1A subfamily. As to quaternary structure, monomer.

It localises to the cytoplasm. It catalyses the reaction GTP + H2O = GDP + phosphate + H(+). In terms of biological role, GTP hydrolase that promotes the GTP-dependent binding of aminoacyl-tRNA to the A-site of ribosomes during protein biosynthesis. The protein is Elongation factor Tu of Burkholderia mallei (strain NCTC 10247).